The chain runs to 93 residues: Neutrophil cationic peptide 2 (93 aa).

The N-terminal stretch at 1–19 (MRTVPLFAACLLLTLMAQA) is a signal peptide. The propeptide occupies 20–62 (EPLPRAADHSDTKMKGDREDHVAVISFWEEESTSLQDAGAGAG). Cystine bridges form between cysteine 65–cysteine 93, cysteine 67–cysteine 82, and cysteine 72–cysteine 92.

It belongs to the alpha-defensin family.

It localises to the secreted. Has antibiotic, anti-fungi and antiviral activity. In Cavia porcellus (Guinea pig), this protein is Neutrophil cationic peptide 2.